Reading from the N-terminus, the 464-residue chain is Glutamate--tRNA ligase 1 (464 aa).

The 'HIGH' region signature appears at 8-18 (PSPTGHLHVGG). The 'KMSKS' region signature appears at 231 to 235 (PLSKR). Lysine 234 contacts ATP.

The protein belongs to the class-I aminoacyl-tRNA synthetase family. Glutamate--tRNA ligase type 1 subfamily. As to quaternary structure, monomer.

It localises to the cytoplasm. It carries out the reaction tRNA(Glu) + L-glutamate + ATP = L-glutamyl-tRNA(Glu) + AMP + diphosphate. In terms of biological role, catalyzes the attachment of glutamate to tRNA(Glu) in a two-step reaction: glutamate is first activated by ATP to form Glu-AMP and then transferred to the acceptor end of tRNA(Glu). The polypeptide is Glutamate--tRNA ligase 1 (Thermotoga sp. (strain RQ2)).